Consider the following 381-residue polypeptide: S-adenosylmethionine synthase (381 aa).

H15 contributes to the ATP binding site. D17 is a Mg(2+) binding site. Position 43 (E43) interacts with K(+). Positions 56 and 99 each coordinate L-methionine. Residues 99-109 (QSPDINQGVDR) are flexible loop. ATP contacts are provided by residues 164–166 (DAK), 230–231 (RF), D239, 245–246 (RK), A262, and K266. An L-methionine-binding site is contributed by D239. L-methionine is bound at residue K270.

This sequence belongs to the AdoMet synthase family. In terms of assembly, homotetramer; dimer of dimers. Mg(2+) serves as cofactor. The cofactor is K(+).

The protein localises to the cytoplasm. The catalysed reaction is L-methionine + ATP + H2O = S-adenosyl-L-methionine + phosphate + diphosphate. The protein operates within amino-acid biosynthesis; S-adenosyl-L-methionine biosynthesis; S-adenosyl-L-methionine from L-methionine: step 1/1. Its function is as follows. Catalyzes the formation of S-adenosylmethionine (AdoMet) from methionine and ATP. The overall synthetic reaction is composed of two sequential steps, AdoMet formation and the subsequent tripolyphosphate hydrolysis which occurs prior to release of AdoMet from the enzyme. In Alteromonas mediterranea (strain DSM 17117 / CIP 110805 / LMG 28347 / Deep ecotype), this protein is S-adenosylmethionine synthase.